Consider the following 177-residue polypeptide: Parathyroid hormone-related protein (177 aa).

Residues 1-24 (MQRRLVQQWSVAVFLLSYAVPSCG) form the signal peptide. A propeptide spanning residues 25 to 34 (RSVEGLSRRL) is cleaved from the precursor. The interval 57–68 (RFFLHHLIAEIH) is important for receptor binding. The tract at residues 74–177 (ATSEVSPNSK…TSLELDSRRH (104 aa)) is disordered. The span at 76–90 (SEVSPNSKPSPNTKN) shows a compositional bias: polar residues. A Nuclear localization signal motif is present at residues 108–129 (TNKVETYKEQPLKTPGKKKKGK). Positions 109-118 (NKVETYKEQP) are enriched in basic and acidic residues. The span at 122 to 132 (PGKKKKGKPGK) shows a compositional bias: basic residues.

This sequence belongs to the parathyroid hormone family. In terms of assembly, interacts with PTH1R (via N-terminal extracellular domain). There are 3 principal secretory forms, called PTHrP[1-36], PTHrP[38-94], and osteostatin (PTHrP[107-139]) arising from endoproteolytic cleavage of the initial translation product. Each of these secretory forms is believed to have one or more of its own receptors that mediates the normal paracrine, autocrine and endocrine actions. As to expression, ubiquitous. Also expressed in the mammary gland.

Its subcellular location is the secreted. The protein localises to the cytoplasm. The protein resides in the nucleus. Its function is as follows. Neuroendocrine peptide which is a critical regulator of cellular and organ growth, development, migration, differentiation and survival and of epithelial calcium ion transport. Acts by binding to its receptor, PTH1R, activating G protein-coupled receptor signaling. Regulates endochondral bone development and epithelial-mesenchymal interactions during the formation of the mammary glands and teeth. Required for skeletal homeostasis. Promotes mammary mesenchyme differentiation and bud outgrowth by modulating mesenchymal cell responsiveness to BMPs. Up-regulates BMPR1A expression in the mammary mesenchyme and this increases the sensitivity of these cells to BMPs and allows them to respond to BMP4 in a paracrine and/or autocrine fashion. BMP4 signaling in the mesenchyme, in turn, triggers epithelial outgrowth and augments MSX2 expression, which causes the mammary mesenchyme to inhibit hair follicle formation within the nipple sheath. Promotes colon cancer cell migration and invasion in an integrin alpha-6/beta-1-dependent manner through activation of Rac1. Potent inhibitor of osteoclastic bone resorption. This Homo sapiens (Human) protein is Parathyroid hormone-related protein.